The chain runs to 142 residues: HTH-type transcriptional regulator MntR (142 aa).

One can recognise an HTH dtxR-type domain in the interval 1–63; sequence MPTPSMEDYI…YEKYRGLVLT (63 aa). Asp8, Glu11, His77, Glu99, Glu102, and His103 together coordinate Mn(2+).

The protein belongs to the DtxR/MntR family. In terms of assembly, homodimer.

It is found in the cytoplasm. With respect to regulation, DNA binding is strongly activated by Mn(2+). Its function is as follows. Central regulator of manganese homeostasis. This is HTH-type transcriptional regulator MntR from Bacillus cytotoxicus (strain DSM 22905 / CIP 110041 / 391-98 / NVH 391-98).